Here is a 150-residue protein sequence, read N- to C-terminus: Ribonuclease H (150 aa).

An RNase H type-1 domain is found at 1–141; the sequence is MRPVIIHTDG…ADQLARDGLT (141 aa). Residues D9, E47, D69, and D133 each coordinate Mg(2+).

The protein belongs to the RNase H family. Monomer. The cofactor is Mg(2+).

The protein localises to the cytoplasm. It carries out the reaction Endonucleolytic cleavage to 5'-phosphomonoester.. Its function is as follows. Endonuclease that specifically degrades the RNA of RNA-DNA hybrids. The polypeptide is Ribonuclease H (Rhodopseudomonas palustris (strain BisB5)).